The following is a 121-amino-acid chain: Large ribosomal subunit protein bL12 (121 aa).

The protein belongs to the bacterial ribosomal protein bL12 family. Homodimer. Part of the ribosomal stalk of the 50S ribosomal subunit. Forms a multimeric L10(L12)X complex, where L10 forms an elongated spine to which 2 to 4 L12 dimers bind in a sequential fashion. Binds GTP-bound translation factors.

Its function is as follows. Forms part of the ribosomal stalk which helps the ribosome interact with GTP-bound translation factors. Is thus essential for accurate translation. The protein is Large ribosomal subunit protein bL12 of Oenococcus oeni (strain ATCC BAA-331 / PSU-1).